Consider the following 179-residue polypeptide: ATP-dependent protease subunit HslV (179 aa).

Thr7 is a catalytic residue. Na(+) contacts are provided by Ala162, Cys165, and Thr168.

Belongs to the peptidase T1B family. HslV subfamily. A double ring-shaped homohexamer of HslV is capped on each side by a ring-shaped HslU homohexamer. The assembly of the HslU/HslV complex is dependent on binding of ATP.

It localises to the cytoplasm. It catalyses the reaction ATP-dependent cleavage of peptide bonds with broad specificity.. With respect to regulation, allosterically activated by HslU binding. Its function is as follows. Protease subunit of a proteasome-like degradation complex believed to be a general protein degrading machinery. In Nitrosococcus oceani (strain ATCC 19707 / BCRC 17464 / JCM 30415 / NCIMB 11848 / C-107), this protein is ATP-dependent protease subunit HslV.